Consider the following 593-residue polypeptide: Aspartate--tRNA(Asp/Asn) ligase (593 aa).

Glutamate 173 serves as a coordination point for L-aspartate. An aspartate region spans residues 197 to 200 (QLFK). Arginine 219 contacts L-aspartate. Residues 219–221 (RDE) and glutamine 228 contribute to the ATP site. Histidine 451 contacts L-aspartate. Residue glutamate 485 participates in ATP binding. Arginine 492 serves as a coordination point for L-aspartate. Position 537-540 (537-540 (GIDR)) interacts with ATP.

This sequence belongs to the class-II aminoacyl-tRNA synthetase family. Type 1 subfamily. As to quaternary structure, homodimer.

It localises to the cytoplasm. It carries out the reaction tRNA(Asx) + L-aspartate + ATP = L-aspartyl-tRNA(Asx) + AMP + diphosphate. Functionally, aspartyl-tRNA synthetase with relaxed tRNA specificity since it is able to aspartylate not only its cognate tRNA(Asp) but also tRNA(Asn). Reaction proceeds in two steps: L-aspartate is first activated by ATP to form Asp-AMP and then transferred to the acceptor end of tRNA(Asp/Asn). The chain is Aspartate--tRNA(Asp/Asn) ligase from Legionella pneumophila (strain Corby).